The sequence spans 99 residues: MMNMQNMMKQAQKLQKQMEQKQADLAAMTFVGKSAQDLVTATFTGDKKMVSIDFKEAVVDPDDMETLSDMTTQAINDALAQIDEATKKTMGAFAGKLPF.

This sequence belongs to the YbaB/EbfC family. In terms of assembly, homodimer.

The protein resides in the cytoplasm. It localises to the nucleoid. Its function is as follows. Binds to DNA and alters its conformation. May be involved in regulation of gene expression, nucleoid organization and DNA protection. The protein is Nucleoid-associated protein SUB1611 of Streptococcus uberis (strain ATCC BAA-854 / 0140J).